The chain runs to 248 residues: MAGHSQFKNIMHRKGKQDSVRSKMFSKLAREITVAAKTGMPDPNMNARLRLAIQNAKAQSMPKDNIERAIKKASGADSENYDEVRYEGYGPGGVAVVVEALTDNRNRTASNVRSIFTKAGGALGETGSVSFSFDRVGEITYKAEVGDADKVMEAAIEAGADDVESSEDGHTIICGFEAMNEVSKALEGVLGEAESVKAIWKPQNTVPVDEEKAQSLMKLIDNLEDDDDVQNVYSNFEVSEEILAKLSA.

The segment at 1–21 (MAGHSQFKNIMHRKGKQDSVR) is disordered.

This sequence belongs to the TACO1 family.

It is found in the cytoplasm. In Agrobacterium fabrum (strain C58 / ATCC 33970) (Agrobacterium tumefaciens (strain C58)), this protein is Probable transcriptional regulatory protein Atu3727.